The following is a 917-amino-acid chain: Hexokinase-1 (917 aa).

Position 1 is an N-acetylmethionine (Met-1). Positions 1–10 are mitochondrial-binding peptide (MBP); that stretch reads MIAAQLLAYY. Hexokinase domains lie at 16–458 and 464–906; these read DDQV…MVTA and AEQH…LITA. ATP contacts are provided by residues Arg-30 and 84–89; that span reads DLGGSS. The interval 73 to 207 is hexokinase small subdomain 1; sequence DGSEKGDFIA…DYDANIVAVV (135 aa). Position 84–91 (84–91) interacts with D-glucose 6-phosphate; it reads DLGGSSFR. Residues Ser-155, 172–173, and 208–209 each bind D-glucose; these read TK and ND. A hexokinase large subdomain 1 region spans residues 208–447; sequence NDTVGTMMTC…SDVRFLLSES (240 aa). 2 residues coordinate D-glucose 6-phosphate: Asp-209 and Thr-232. D-glucose-binding positions include Asn-235, Glu-260, and 291 to 294; that span reads QLFE. At Ser-337 the chain carries Phosphoserine. Position 345 (Asn-345) interacts with ATP. 413–415 contributes to the D-glucose 6-phosphate binding site; that stretch reads DGS. An ATP-binding site is contributed by 425-426; that stretch reads RR. D-glucose 6-phosphate-binding positions include Ser-449 and 532–536; that span reads DLGGT. The segment at 521–655 is hexokinase small subdomain 2; it reads DGTENGDFLA…EFDLDVVAVV (135 aa). 532–537 contacts ATP; sequence DLGGTN. D-glucose-binding positions include 603–604, 620–621, and 656–657; these read SF, TK, and ND. The tract at residues 656–895 is hexokinase large subdomain 2; the sequence is NDTVGTMMTC…CNVSFLLSED (240 aa). D-glucose 6-phosphate is bound by residues Asp-657 and Thr-680. An ATP-binding site is contributed by Thr-680. Residues 682-683, Glu-708, and Glu-742 contribute to the D-glucose site; that span reads SN. Residues 747–748, 784–788, and 863–867 contribute to the ATP site; these read GM, TKFLS, and TLYKL. Residues 861–863 and Ser-897 contribute to the D-glucose 6-phosphate site; that span reads DGT.

Belongs to the hexokinase family. Monomer. Interacts with RABL2/RABL2A; binds preferentially to GTP-bound RABL2. Interacts with VDAC1. The HK1-VDAC1 complex interacts with ATF2. Interacts (via N-terminal spermatogenic cell-specific region) with PFKM (via C-terminus). Interacts with SMAD5.

It localises to the mitochondrion outer membrane. The protein localises to the cytoplasm. Its subcellular location is the cytosol. It carries out the reaction a D-hexose + ATP = a D-hexose 6-phosphate + ADP + H(+). The catalysed reaction is D-fructose + ATP = D-fructose 6-phosphate + ADP + H(+). It catalyses the reaction D-glucose + ATP = D-glucose 6-phosphate + ADP + H(+). The enzyme catalyses D-mannose + ATP = D-mannose 6-phosphate + ADP + H(+). It carries out the reaction D-glucosamine + ATP = D-glucosamine 6-phosphate + ADP + H(+). It functions in the pathway carbohydrate metabolism; hexose metabolism. Its pathway is carbohydrate degradation; glycolysis; D-glyceraldehyde 3-phosphate and glycerone phosphate from D-glucose: step 1/4. Hexokinase is an allosteric enzyme inhibited by its product D-glucose 6-phosphate. Hexokinase activity is inhibited by N-acetyl-D-glucosamine. In terms of biological role, catalyzes the phosphorylation of various hexoses, such as D-glucose, D-glucosamine, D-fructose, D-mannose and 2-deoxy-D-glucose, to hexose 6-phosphate (D-glucose 6-phosphate, D-glucosamine 6-phosphate, D-fructose 6-phosphate, D-mannose 6-phosphate and 2-deoxy-D-glucose 6-phosphate, respectively). Does not phosphorylate N-acetyl-D-glucosamine. Mediates the initial step of glycolysis by catalyzing phosphorylation of D-glucose to D-glucose 6-phosphate. Involved in innate immunity and inflammation by acting as a pattern recognition receptor for bacterial peptidoglycan. When released in the cytosol, N-acetyl-D-glucosamine component of bacterial peptidoglycan inhibits the hexokinase activity of HK1 and causes its dissociation from mitochondrial outer membrane, thereby activating the NLRP3 inflammasome. The polypeptide is Hexokinase-1 (Pongo abelii (Sumatran orangutan)).